We begin with the raw amino-acid sequence, 187 residues long: MISSNDFRTGTTIELDGAVWRVIEFLHVKPGKGSAFVRTKLKAVVSGSVVEKTFRAGEMVPQALLEKSKLQHTYMDGDEFVFMDMTSYEETRLTAKQIGESRKYLKEGMEVNVVSWNEKPLEVELPNSVVLEIKETDPGVKGDTASGGTKPAILETGAQVMVPLFISIGEKIRVDTRNDSYLGRETQ.

Belongs to the elongation factor P family.

The protein localises to the cytoplasm. The protein operates within protein biosynthesis; polypeptide chain elongation. Its function is as follows. Involved in peptide bond synthesis. Stimulates efficient translation and peptide-bond synthesis on native or reconstituted 70S ribosomes in vitro. Probably functions indirectly by altering the affinity of the ribosome for aminoacyl-tRNA, thus increasing their reactivity as acceptors for peptidyl transferase. The protein is Elongation factor P of Prochlorococcus marinus (strain NATL1A).